The following is a 201-amino-acid chain: NAD(P)H dehydrogenase (quinone) (201 aa).

A Flavodoxin-like domain is found at 4–191 (VLVLYYSMYG…KIAKCQGVHV (188 aa)). FMN is bound by residues 10 to 15 (SMYGHV) and 79 to 81 (TRF). Tyr12 is a binding site for NAD(+). Trp99 contacts substrate. FMN contacts are provided by residues 114–120 (STGTQHG) and His135.

Belongs to the WrbA family. FMN is required as a cofactor.

It catalyses the reaction a quinone + NADH + H(+) = a quinol + NAD(+). The catalysed reaction is a quinone + NADPH + H(+) = a quinol + NADP(+). The protein is NAD(P)H dehydrogenase (quinone) of Hydrogenovibrio crunogenus (strain DSM 25203 / XCL-2) (Thiomicrospira crunogena).